We begin with the raw amino-acid sequence, 128 residues long: Large ribosomal subunit protein bL17 (128 aa).

It belongs to the bacterial ribosomal protein bL17 family. As to quaternary structure, part of the 50S ribosomal subunit. Contacts protein L32.

This Baumannia cicadellinicola subsp. Homalodisca coagulata protein is Large ribosomal subunit protein bL17.